The primary structure comprises 142 residues: PDZ domain-containing protein 11 (142 aa).

The PDZ domain occupies 49–131 (TIVLKKPPGA…ILMKVRYFPY (83 aa)).

It is found in the cytoplasm. The polypeptide is PDZ domain-containing protein 11 (pdzd11) (Danio rerio (Zebrafish)).